A 144-amino-acid chain; its full sequence is L-fucose mutarotase (144 aa).

His-22 functions as the Proton donor in the catalytic mechanism. Residues Asp-30, Arg-109, and 131-133 (YGN) contribute to the substrate site.

Belongs to the RbsD / FucU family. FucU mutarotase subfamily. Homodecamer.

The protein localises to the cytoplasm. It carries out the reaction alpha-L-fucose = beta-L-fucose. Its pathway is carbohydrate metabolism; L-fucose metabolism. Involved in the anomeric conversion of L-fucose. The chain is L-fucose mutarotase from Histophilus somni (strain 129Pt) (Haemophilus somnus).